The chain runs to 525 residues: G patch domain-containing protein 3 (525 aa).

Disordered stretches follow at residues 54–85 (ERGP…PASD) and 246–317 (EQEE…QERT). Over residues 274-299 (DEPEDEGQQQEEEEESGSEEDDDRGE) the composition is skewed to acidic residues. The segment covering 300 to 317 (EWERHEALHEDVTGQERT) has biased composition (basic and acidic residues). The G-patch domain occupies 411–459 (TKGIGRKVMERQGWAEGQGLGSRCSGVPEALDGDGQHPRCKRGLGYHGE).

As to quaternary structure, interacts with mitochondrial MAVS; the interaction is markedly increased upon viral infection.

The protein resides in the nucleus. It is found in the cytoplasm. In terms of biological role, involved in transcriptional regulation. It is able to activate transcription from CXCR4 promoter and therefore it might control neural crest cell migration involved in ocular and craniofacial development. Is a negative regulator of immune antiviral response, acting via down-regulation of RIG-I-like receptors signaling and inhibition of type I interferon production. The control mechanism involves interaction with mitochondrial MAVS and inhibition of MAVS assembly with downstream proteins implicated in antiviral response, such as TBK1 and TRAF6. The polypeptide is G patch domain-containing protein 3 (Gpatch3) (Mus musculus (Mouse)).